We begin with the raw amino-acid sequence, 616 residues long: UPF0329 protein ECU02_1540 (616 aa).

2 stretches are compositionally biased toward basic and acidic residues: residues 350–359 (EREKREESKG) and 369–381 (GAGE…KEED). The disordered stretch occupies residues 350–427 (EREKREESKG…RKGDGHHYKI (78 aa)). Positions 382–396 (GKEEEGVEAEEEESA) are enriched in acidic residues. Over residues 408 to 427 (ARRKKSLKGKRKGDGHHYKI) the composition is skewed to basic residues.

This sequence belongs to the UPF0329 family.

This chain is UPF0329 protein ECU02_1540, found in Encephalitozoon cuniculi (strain GB-M1) (Microsporidian parasite).